The sequence spans 184 residues: Adenine phosphoribosyltransferase 2 (184 aa).

It belongs to the purine/pyrimidine phosphoribosyltransferase family. As to quaternary structure, homodimer.

The protein localises to the cytoplasm. The catalysed reaction is AMP + diphosphate = 5-phospho-alpha-D-ribose 1-diphosphate + adenine. It functions in the pathway purine metabolism; AMP biosynthesis via salvage pathway; AMP from adenine: step 1/1. Catalyzes a salvage reaction resulting in the formation of AMP, that is energically less costly than de novo synthesis. The polypeptide is Adenine phosphoribosyltransferase 2 (Rhizobium etli (strain ATCC 51251 / DSM 11541 / JCM 21823 / NBRC 15573 / CFN 42)).